Consider the following 127-residue polypeptide: Major sperm protein 78 (127 aa).

An N-acetylalanine modification is found at Ala2. The region spanning Asp9 to Asn126 is the MSP domain.

Sperm.

Its subcellular location is the cell projection. It is found in the pseudopodium. It localises to the cytoplasm. The protein resides in the cytoskeleton. Functionally, central component in molecular interactions underlying sperm crawling. Forms an extensive filament system that extends from sperm villipoda, along the leading edge of the pseudopod. The polypeptide is Major sperm protein 78 (msp-78) (Caenorhabditis elegans).